Reading from the N-terminus, the 610-residue chain is Serine/threonine-protein kinase VRK1 (610 aa).

The region spanning 32-384 (FIVGKQFATG…PRKRTTRKAV (353 aa)) is the Protein kinase domain. Residues 38–46 (FATGGFGRI) and lysine 61 contribute to the ATP site. Residue aspartate 167 is the Proton acceptor of the active site. Disordered stretches follow at residues 317–476 (IQKT…NKVA), 498–530 (ISVA…VGEG), 544–577 (KKAK…KGRR), and 590–610 (ERLA…SSEV). Residues 352-373 (AVKEESDNKDNDEVEVKPEKKA) show a composition bias toward basic and acidic residues. Residues 388 to 397 (NDSDDNEEQY) show a composition bias toward acidic residues. A compositionally biased stretch (low complexity) spans 447–458 (TTPSSAASTSRS). The span at 465–474 (LTSSTASSNK) shows a compositional bias: polar residues. Positions 502–517 (SDKSPTTSTPSSSSGL) are enriched in low complexity. Polar residues-rich tracts occupy residues 550–559 (SGISSATKAS) and 594–610 (SRQT…SSEV).

It belongs to the protein kinase superfamily. CK1 Ser/Thr protein kinase family. VRK subfamily. Post-translationally, autophosphorylates in vitro. In terms of tissue distribution, present in germ cells at all stages of progression from the mitotic zone to mature oocytes, but not in maturing spermatids (at the protein level). Expressed in the ventral nerve cord and vulva cells.

The protein localises to the nucleus. It is found in the cytoplasm. It localises to the cajal body. The catalysed reaction is L-seryl-[protein] + ATP = O-phospho-L-seryl-[protein] + ADP + H(+). It carries out the reaction L-threonyl-[protein] + ATP = O-phospho-L-threonyl-[protein] + ADP + H(+). Serine/threonine kinase that phosphorylates baf-1, thus regulating the association of baf-1 with chromatin and nuclear membrane proteins during nuclear envelope formation. May act through the egl-17 signaling pathway. Essential in hermaphrodites for formation of the vulva, uterus, and uterine seam cells and for development and maintenance of the somatic gonad and thus the germ line. Acts to prevent cep-1 from triggering an inappropriate cell cycle arrest, thereby promoting germ cell proliferation. Regulates anchor cell polarity and the timing of anchor cell invasion through the basement membranes separating vulval and somatic gonadal cells during the L3 larval stage. This chain is Serine/threonine-protein kinase VRK1, found in Caenorhabditis elegans.